The following is a 118-amino-acid chain: Holo-[acyl-carrier-protein] synthase (118 aa).

2 residues coordinate Mg(2+): Asp-5 and Glu-51.

It belongs to the P-Pant transferase superfamily. AcpS family. It depends on Mg(2+) as a cofactor.

The protein localises to the cytoplasm. It carries out the reaction apo-[ACP] + CoA = holo-[ACP] + adenosine 3',5'-bisphosphate + H(+). Functionally, transfers the 4'-phosphopantetheine moiety from coenzyme A to a Ser of acyl-carrier-protein. In Helicobacter pylori (strain P12), this protein is Holo-[acyl-carrier-protein] synthase.